The sequence spans 480 residues: Altronate oxidoreductase (480 aa).

Position 19-30 (19-30 (ILQFGEGNFLRG)) interacts with NAD(+).

The protein belongs to the mannitol dehydrogenase family. UxaB subfamily.

The enzyme catalyses D-altronate + NAD(+) = keto-D-tagaturonate + NADH + H(+). The protein operates within carbohydrate metabolism; pentose and glucuronate interconversion. The chain is Altronate oxidoreductase from Bacillus subtilis (strain 168).